Reading from the N-terminus, the 212-residue chain is Eukaryotic translation initiation factor 4E-1 (212 aa).

A disulfide bridge links Cys-125 with Cys-129.

It belongs to the eukaryotic initiation factor 4E family. In terms of assembly, EIF4F is a multi-subunit complex, the composition of which varies with external and internal environmental conditions. It is composed of at least EIF4A, EIF4E and EIF4G. EIF4E is also known to interact with other partners, including pgl-1. Interacts with ifet-1. As to expression, enriched in the germline from L3 larvae to adults; regions of the gonad undergoing spermatogenesis. Expressed in germ granules (P granules); when associated with pgl-1.

The protein localises to the cytoplasm. Recognizes and binds the 7-methylguanosine-containing mRNA cap during an early step in the initiation of protein synthesis and facilitates ribosome binding by inducing the unwinding of the mRNAs secondary structures. All 5 eIF4E proteins bind monomethyl cap structures. Only ife-1, ife-2 and ife-5 bind trimethyl cap structures which result from trans-splicing. Translation of trimethyl cap structure mRNAs may be regulated by intracellular redox state; disulfide bonds change the width and depth of the cap-binding cavity determining selectivity to mRNA caps. Required for progression through meiotic divisions during spermatogenesis and for the production of viable sperm. It is not required during oogenesis. The protein is Eukaryotic translation initiation factor 4E-1 (ife-1) of Caenorhabditis elegans.